The sequence spans 465 residues: Argininosuccinate lyase (465 aa).

This sequence belongs to the lyase 1 family. Argininosuccinate lyase subfamily.

It is found in the cytoplasm. It catalyses the reaction 2-(N(omega)-L-arginino)succinate = fumarate + L-arginine. It participates in amino-acid biosynthesis; L-arginine biosynthesis; L-arginine from L-ornithine and carbamoyl phosphate: step 3/3. In Deinococcus deserti (strain DSM 17065 / CIP 109153 / LMG 22923 / VCD115), this protein is Argininosuccinate lyase.